Here is a 319-residue protein sequence, read N- to C-terminus: tRNA uridine(34) hydroxylase (319 aa).

The Rhodanese domain maps to 133–231 (EDPNSVVIDT…YLEDVSSENS (99 aa)). Residue C191 is the Cysteine persulfide intermediate of the active site.

This sequence belongs to the TrhO family.

It carries out the reaction uridine(34) in tRNA + AH2 + O2 = 5-hydroxyuridine(34) in tRNA + A + H2O. Catalyzes oxygen-dependent 5-hydroxyuridine (ho5U) modification at position 34 in tRNAs. In Prochlorococcus marinus (strain NATL2A), this protein is tRNA uridine(34) hydroxylase.